A 399-amino-acid chain; its full sequence is 3-phosphoshikimate 1-carboxyvinyltransferase (399 aa).

3-phosphoshikimate is bound by residues Lys-19, Ser-20, and Arg-24. Lys-19 is a phosphoenolpyruvate binding site. Phosphoenolpyruvate contacts are provided by Gly-83 and Arg-111. 6 residues coordinate 3-phosphoshikimate: Ser-152, Ser-153, Gln-154, Asp-288, Gln-310, and Lys-314. Gln-154 contributes to the phosphoenolpyruvate binding site. Asp-288 acts as the Proton acceptor in catalysis. The phosphoenolpyruvate site is built by Arg-318, Arg-359, and Lys-385.

It belongs to the EPSP synthase family. In terms of assembly, monomer.

The protein localises to the cytoplasm. It carries out the reaction 3-phosphoshikimate + phosphoenolpyruvate = 5-O-(1-carboxyvinyl)-3-phosphoshikimate + phosphate. It participates in metabolic intermediate biosynthesis; chorismate biosynthesis. Functionally, catalyzes the transfer of the enolpyruvyl moiety of phosphoenolpyruvate (PEP) to the 5-hydroxyl of shikimate-3-phosphate (S3P) to produce enolpyruvyl shikimate-3-phosphate and inorganic phosphate. The sequence is that of 3-phosphoshikimate 1-carboxyvinyltransferase from Thermococcus kodakarensis (strain ATCC BAA-918 / JCM 12380 / KOD1) (Pyrococcus kodakaraensis (strain KOD1)).